The sequence spans 122 residues: Acidic phospholipase A2 (122 aa).

7 cysteine pairs are disulfide-bonded: C26-C115, C28-C44, C43-C95, C49-C122, C50-C88, C57-C81, and C75-C86. The Ca(2+) site is built by Y27, G29, and G31. H47 is an active-site residue. D48 serves as a coordination point for Ca(2+). D89 is a catalytic residue.

The protein belongs to the phospholipase A2 family. Group II subfamily. D49 sub-subfamily. Ca(2+) serves as cofactor. In terms of processing, contains 7 disulfide bonds. As to expression, expressed by the venom gland.

It is found in the secreted. It catalyses the reaction a 1,2-diacyl-sn-glycero-3-phosphocholine + H2O = a 1-acyl-sn-glycero-3-phosphocholine + a fatty acid + H(+). Snake venom phospholipase A2 (PLA2) that displays low systemic toxicity and causes severe symptoms only at very high concentrations (15 mg/kg). Has neither coagulant nor anticoagulant activity. PLA2 catalyzes the calcium-dependent hydrolysis of the 2-acyl groups in 3-sn-phosphoglycerides. This is Acidic phospholipase A2 from Bothrops ammodytoides (Yararanata).